The primary structure comprises 160 residues: Ribonuclease HI (160 aa).

One can recognise an RNase H type-1 domain in the interval 4-147 (TPNSVTLYTD…CDRLAVAAYQ (144 aa)). Aspartate 13, glutamate 52, aspartate 74, and aspartate 139 together coordinate Mg(2+).

Belongs to the RNase H family. In terms of assembly, monomer. Requires Mg(2+) as cofactor.

The protein localises to the cytoplasm. The enzyme catalyses Endonucleolytic cleavage to 5'-phosphomonoester.. Functionally, endonuclease that specifically degrades the RNA of RNA-DNA hybrids. The sequence is that of Ribonuclease HI (rnhA) from Synechocystis sp. (strain ATCC 27184 / PCC 6803 / Kazusa).